We begin with the raw amino-acid sequence, 143 residues long: uncharacterized protein (143 aa).

The tract at residues 13-143 (SLQFPHHRPG…QDAAHQCRIQ (131 aa)) is disordered. Basic residues predominate over residues 17–31 (PHHRPGLRRHRKNTT). Basic and acidic residues-rich tracts occupy residues 35-48 (AAVDRPRRTRRGDA), 84-96 (DGREASRTAAEEK), and 112-133 (EKQHVGQDPDANGNHDDDDHAG). Low complexity predominate over residues 134–143 (QDAAHQCRIQ).

This is an uncharacterized protein from Homo sapiens (Human).